The chain runs to 294 residues: MASTAPFAKMNGIGNEIIVADMRGRADQVTAAAALALNGDAATRFDQIMAIHDARTPGTAYYVDILNSDGTSAQACGNGMRCVVQALAAETGQKTFTFETRAGILNAREHADGTISVDMGMPHFGWQEIPLAEEFRDTRMIELQIGPIDAPVLHSPSAVSMGNPHAIFWVDRDVWSYELERFGPLLENHPIFPERANITIAQVTSPESMIIRTWERGAGLTKACGSAACASVVAAARTRRTGRSVNLLTPGGGTLHVEWLDNDHVILTGAAEWEFSGSFDPSTGTWARDTESAA.

Substrate-binding residues include Asn15, Gln47, and Asn67. The Proton donor role is filled by Cys76. Substrate contacts are provided by residues 77–78 (GN), Asn163, Asn197, and 215–216 (ER). Cys224 functions as the Proton acceptor in the catalytic mechanism. Position 225–226 (225–226 (GS)) interacts with substrate.

It belongs to the diaminopimelate epimerase family. Homodimer.

The protein resides in the cytoplasm. It carries out the reaction (2S,6S)-2,6-diaminopimelate = meso-2,6-diaminopimelate. It functions in the pathway amino-acid biosynthesis; L-lysine biosynthesis via DAP pathway; DL-2,6-diaminopimelate from LL-2,6-diaminopimelate: step 1/1. Its function is as follows. Catalyzes the stereoinversion of LL-2,6-diaminopimelate (L,L-DAP) to meso-diaminopimelate (meso-DAP), a precursor of L-lysine and an essential component of the bacterial peptidoglycan. In Mesorhizobium japonicum (strain LMG 29417 / CECT 9101 / MAFF 303099) (Mesorhizobium loti (strain MAFF 303099)), this protein is Diaminopimelate epimerase.